Reading from the N-terminus, the 389-residue chain is Geodin cluster transcriptional coactivator gedD (389 aa).

An HTH iclR-type domain is found at 13–83; sequence LAWHVQLLAC…QPGQIMHTPL (71 aa). Positions 43-62 form a DNA-binding region, H-T-H motif; the sequence is VRDLAQLCGVSETTLSRVVR.

The protein localises to the nucleus. Functionally, transcriptional coactivator; part of the gene cluster that mediates the biosynthesis of geodin, an intermediate in the biosynthesis of other natural products. With gedR, coregulates the production of geodin. In Aspergillus terreus (strain NIH 2624 / FGSC A1156), this protein is Geodin cluster transcriptional coactivator gedD (gedD).